The primary structure comprises 133 residues: Small ribosomal subunit protein uS8 (133 aa).

Belongs to the universal ribosomal protein uS8 family. As to quaternary structure, part of the 30S ribosomal subunit. Contacts proteins S5 and S12.

Functionally, one of the primary rRNA binding proteins, it binds directly to 16S rRNA central domain where it helps coordinate assembly of the platform of the 30S subunit. This is Small ribosomal subunit protein uS8 from Synechococcus elongatus (strain ATCC 33912 / PCC 7942 / FACHB-805) (Anacystis nidulans R2).